The chain runs to 238 residues: Putative pectate lyase X (238 aa).

Positions 1–22 are cleaved as a signal peptide; sequence MKYLLPTAAAGLLLLAAQPAMA. 3 residues coordinate Ca(2+): Asp153, Glu188, and Asp192.

Belongs to the polysaccharide lyase 1 family. Ca(2+) is required as a cofactor.

The enzyme catalyses Eliminative cleavage of (1-&gt;4)-alpha-D-galacturonan to give oligosaccharides with 4-deoxy-alpha-D-galact-4-enuronosyl groups at their non-reducing ends.. The protein operates within glycan metabolism; pectin degradation; 2-dehydro-3-deoxy-D-gluconate from pectin: step 2/5. Involved in maceration and soft-rotting of plant tissue. The sequence is that of Putative pectate lyase X (PEL X) from Pectobacterium carotovorum (Erwinia carotovora).